The sequence spans 902 residues: MSEDQGQQGQRLSTARGSTCLKQTMTEPALSAGLGTDGPVGAAKDNIRVRIQSRRRSRLLSRLGRKIPTQGRFTVGWYFWFLLIYTSLAVEPVKSHETHSHSSDAEGTSHQDVSDRRNHPCHTPRPSSHSQADSFESVARGQQKEQSRTMREDAVSPVLLDVKRSQSTPVELAKLVSLKLSTSFGSRTVIRRSQPGVRQSVRAAQLQRMMLDRGNPKRERSSGSSTPSSKSSPVDSVSTAPTSVSPGSLAPSGSTNNDPASGFKHIDSQADLPERPLSPVRESPMVSPTIQTTEATAIVKVFLETHFHTLLSGLDARTQRRLELDQYIETFPLSPEEVVRVRKHWVTQERDYLRQYRVLKSRPQDKTSRAGTASLAGFEPLKILGRGSFGVVRLVREKRTDEQTQSGRVPLAPKTNHRQAMTGVKKDVFAMKVIRKSVMIRNCQEAHLRAERDFLVASAKSRWVVPLIASFQDQKHLYLVMDYMVGGDFLGLLIRHNILRESIARWYVAEMILCIEEAHRLRCIHRDVKPDNFLISESGHLKISDFGLAFDGHWAHDQWYFTYQRHSLLKRLGIQIDGDAEDQKLSHDANIQSLGTTREDGSMEDDWIHPPTNGLLHWRDKNQTRTMARSVVGTSQYMAPEVIRGHPYDGRCDWWSLGVILYECLYGFTPFASEDRHQTKLKIHRHLQTLYFPVHRPTDKLVSADAIDVINSLLQEKEFRLSSPKYKQNDAISSKPAKCSFYKPDSSNPSYQGHYVYPDDATDIKSHRFFRGINWEQIHRTSPPFIPMVRGWEDTRYFDDGEHPSDREDDSSDSELDGVQDKWHPLGGKGGLHKPDKPLKADVKPSSYPKGNDGAKDTAIASLKHKKRLKEAKRARDKILRDKRLRRTVLEMLRCLVVVAAT.

Disordered stretches follow at residues 1–22 (MSED…TCLK), 97–154 (ETHS…REDA), and 207–288 (QRMM…MVSP). Residues 97-118 (ETHSHSSDAEGTSHQDVSDRRN) show a composition bias toward basic and acidic residues. Polar residues predominate over residues 125 to 134 (RPSSHSQADS). Composition is skewed to basic and acidic residues over residues 142–154 (QQKE…REDA) and 210–221 (MLDRGNPKRERS). The segment covering 222–239 (SGSSTPSSKSSPVDSVST) has biased composition (low complexity). Residues 240-259 (APTSVSPGSLAPSGSTNNDP) are compositionally biased toward polar residues. Residues 264–274 (KHIDSQADLPE) show a composition bias toward basic and acidic residues. The Protein kinase domain maps to 378–732 (FEPLKILGRG…SPKYKQNDAI (355 aa)). Residues 384–392 (LGRGSFGVV) and K432 contribute to the ATP site. The Proton acceptor role is filled by D527. Residues 771–831 (RGINWEQIHR…KWHPLGGKGG (61 aa)) form the AGC-kinase C-terminal domain. Positions 797–806 (YFDDGEHPSD) are enriched in basic and acidic residues. Residues 797 to 875 (YFDDGEHPSD…KKRLKEAKRA (79 aa)) form a disordered region. Residues 807 to 818 (REDDSSDSELDG) are compositionally biased toward acidic residues. Over residues 833 to 843 (HKPDKPLKADV) the composition is skewed to basic and acidic residues.

The protein belongs to the protein kinase superfamily. STE Ser/Thr protein kinase family. COT1 subfamily.

It carries out the reaction L-seryl-[protein] + ATP = O-phospho-L-seryl-[protein] + ADP + H(+). It catalyses the reaction L-threonyl-[protein] + ATP = O-phospho-L-threonyl-[protein] + ADP + H(+). In terms of biological role, protein kinase that seems to play a role in the regulation of cell morphogenesis and proliferation. This is Serine/threonine-protein kinase cbk1 (cbk1) from Emericella nidulans (strain FGSC A4 / ATCC 38163 / CBS 112.46 / NRRL 194 / M139) (Aspergillus nidulans).